The primary structure comprises 439 residues: Taxadien-5-alpha-ol O-acetyltransferase (439 aa).

Active-site proton acceptor residues include His-164 and Asp-373.

The protein belongs to the plant acyltransferase family.

The catalysed reaction is taxa-4(20),11-dien-5alpha-ol + acetyl-CoA = taxa-4(20),11-dien-5alpha-yl acetate + CoA. It functions in the pathway alkaloid biosynthesis; taxol biosynthesis; 10-deacetyl-2-debenzoylbaccatin III from taxa-4(20),11-dien-5alpha-ol: step 1/3. The polypeptide is Taxadien-5-alpha-ol O-acetyltransferase (Taxus chinensis (Chinese yew)).